The following is a 77-amino-acid chain: Lantipeptide prochlorosin 4.3 (77 aa).

A propeptide spanning residues 1 to 64 (MSEEQLKAFI…DDELEGVAGG (64 aa)) is cleaved from the precursor. At Thr-65 the chain carries 2,3-didehydrobutyrine. Residues 67 to 70 (SGGC) constitute a cross-link (lanthionine (Ser-Cys)). Residues 72–76 (TSMFC) constitute a cross-link (beta-methyllanthionine (Thr-Cys)).

Post-translationally, cross-links are proved in vitro, when coepressed in E.coli with the ProcM lanthionine synthetase. The lanthionine residue has both a DL configuration (with 2S,6R stereochemistry) and a LL configuration (with 2R,6R stereochemistry). DL and LL diastomers have a 4:1 ratio. It is unknown whether nonenzymatic cyclization occur, but authors favor a model in which ProcM does generate all thioether cross-links. The beta-methyllanthionine residue has a DL configuration (with 2S,3S,6R stereochemistry). In terms of processing, maturation of prochlorosin involves the enzymatic conversion of Thr, and Ser into dehydrated AA and the formation of thioether bonds with cysteines. This is followed by membrane translocation and cleavage of the modified precursor.

Its subcellular location is the secreted. Its function is as follows. Lanthionine-containing peptide (lantipeptide) with unknown function. Does not show antibiotic activity against Lactococcus lactis 117 and Bacillus subtilis 6633 bacteria. Organisms that produce this peptide live in oligotrophic environments at very dilute concentrations, suggesting this peptide is not secreted to influence other bacteria. The chain is Lantipeptide prochlorosin 4.3 from Prochlorococcus marinus (strain MIT 9313).